A 216-amino-acid polypeptide reads, in one-letter code: Adenylate kinase (216 aa).

10–15 (GAGKGT) lines the ATP pocket. The tract at residues 30–59 (STGDIFRAAIKNQTPMGVEAKKFIDKGELV) is NMP. Residues Thr-31, Arg-36, 57-59 (ELV), 85-88 (GFPR), and Gln-92 each bind AMP. The tract at residues 126-164 (GRFICRNCGTTYHRLYNPTKVEGTCDVCGGHDFYQRDDD) is LID. Residue Arg-127 participates in ATP binding. Cys-130 and Cys-133 together coordinate Zn(2+). 136-137 (TY) contributes to the ATP binding site. 2 residues coordinate Zn(2+): Cys-150 and Cys-153. AMP contacts are provided by Arg-161 and Arg-172. Gln-200 contacts ATP.

This sequence belongs to the adenylate kinase family. As to quaternary structure, monomer.

It is found in the cytoplasm. It carries out the reaction AMP + ATP = 2 ADP. The protein operates within purine metabolism; AMP biosynthesis via salvage pathway; AMP from ADP: step 1/1. Functionally, catalyzes the reversible transfer of the terminal phosphate group between ATP and AMP. Plays an important role in cellular energy homeostasis and in adenine nucleotide metabolism. The polypeptide is Adenylate kinase (Limosilactobacillus fermentum (strain NBRC 3956 / LMG 18251) (Lactobacillus fermentum)).